Consider the following 298-residue polypeptide: Fluorinase (298 aa).

S-adenosyl-L-methionine contacts are provided by residues D14, 19–21 (DDS), Y75, S156, D209, N214, 268–269 (SR), and 276–278 (RNA).

This sequence belongs to the SAM hydrolase / SAM-dependent halogenase family.

It catalyses the reaction fluoride + S-adenosyl-L-methionine = 5'-deoxy-5'-fluoroadenosine + L-methionine. Its function is as follows. Catalyzes the formation of a C-F bond by combining S-adenosyl-L-methionine (SAM) and fluoride to generate 5'-fluoro-5'-deoxyadenosine (5'-FDA) and L-methionine. The chain is Fluorinase from Actinoplanes sp. (strain N902-109).